A 658-amino-acid polypeptide reads, in one-letter code: Secretin XcpQ (658 aa).

An N-terminal signal peptide occupies residues 1 to 34 (MSQPLLRALFAPSSRSYVPAVLLSLALGIQAAHA). The interval 51–141 (AHWTINLKDA…TEAGGGQSAP (91 aa)) is N0. An N1 region spans residues 142-205 (DRLETRVIQV…DVIRQLDQKG (64 aa)). The interval 206–279 (SHDYSVINLR…SLDTPTARSA (74 aa)) is N2. Residues 280 to 365 (NTRVIRLRHN…VPRAQVLVEA (86 aa)) form an N3 region. Residues 302-322 (SEGMKNNGGQGGEQTGGGRPS) are disordered. Over residues 307–320 (NNGGQGGEQTGGGR) the composition is skewed to gly residues. The tract at residues 368-606 (VEISGDIQDA…VFLRPTVVRD (239 aa)) is secretin. Residues 608 to 658 (AGLAALSGKKYSDIRVIDGTRGPEGRPSILPTNANQLFDGQAVDLRELMTE) form a s domain region.

It belongs to the bacterial secretin family. GSP D subfamily. As to quaternary structure, forms a cylindrical channel with 15 subunits. The closed pentadecameric channel is 170 Angstroms long and 140 Angstroms in diameter.

The protein localises to the cell outer membrane. Its function is as follows. Involved in a type II secretion system (T2SS, formerly general secretion pathway, GSP) for the export of proteins. This subunit forms the outer membrane channel. Among its substrates are PrpL, elastase LasB, chitin binding protein D (CbpD), aminopeptidase PaAP, and metalloprotease ImpA. In Pseudomonas aeruginosa (strain ATCC 15692 / DSM 22644 / CIP 104116 / JCM 14847 / LMG 12228 / 1C / PRS 101 / PAO1), this protein is Secretin XcpQ.